Here is a 202-residue protein sequence, read N- to C-terminus: Phosphoenolpyruvate guanylyltransferase (202 aa).

Residues T140, G156, and S159 each coordinate phosphoenolpyruvate.

It belongs to the CofC family.

The enzyme catalyses phosphoenolpyruvate + GTP + H(+) = enolpyruvoyl-2-diphospho-5'-guanosine + diphosphate. It functions in the pathway cofactor biosynthesis; coenzyme F420 biosynthesis. Functionally, guanylyltransferase that catalyzes the activation of phosphoenolpyruvate (PEP) as enolpyruvoyl-2-diphospho-5'-guanosine, via the condensation of PEP with GTP. It is involved in the biosynthesis of coenzyme F420, a hydride carrier cofactor. The chain is Phosphoenolpyruvate guanylyltransferase from Chloroflexus aggregans (strain MD-66 / DSM 9485).